Reading from the N-terminus, the 363-residue chain is Mitogen-activated protein kinase 12 (363 aa).

One can recognise a Protein kinase domain in the interval 25 to 309; that stretch reads YKDLKQVGTG…AAEALAFPFF (285 aa). ATP-binding positions include 31–39 and Lys-54; that span reads VGTGAYGTV. Residue Asp-151 is the Proton acceptor of the active site. Thr-181 is modified (phosphothreonine). A TXY motif is present at residues 181–183; the sequence is TGY. Tyr-183 is subject to Phosphotyrosine.

This sequence belongs to the protein kinase superfamily. CMGC Ser/Thr protein kinase family. MAP kinase subfamily. It depends on Mg(2+) as a cofactor. In terms of processing, dually phosphorylated on Thr-181 and Tyr-183, which activates the enzyme.

Its subcellular location is the cytoplasm. The catalysed reaction is L-seryl-[protein] + ATP = O-phospho-L-seryl-[protein] + ADP + H(+). The enzyme catalyses L-threonyl-[protein] + ATP = O-phospho-L-threonyl-[protein] + ADP + H(+). With respect to regulation, activated by threonine and tyrosine phosphorylation. Functionally, serine/threonine kinase which acts as an essential component of the MAP kinase signal transduction pathway. MAPK12 is one of the four p38 MAPKs which play an important role in the cascades of cellular responses evoked by extracellular stimuli such as pro-inflammatory cytokines or physical stress leading to direct activation of transcription factors. Accordingly, p38 MAPKs phosphorylate a broad range of proteins and it has been estimated that they may have approximately 200 to 300 substrates each. Some of the targets are downstream kinases such as MAPKAPK2, which are activated through phosphorylation and further phosphorylate additional targets. The polypeptide is Mitogen-activated protein kinase 12 (mapk12) (Danio rerio (Zebrafish)).